We begin with the raw amino-acid sequence, 163 residues long: IQSSSMDQGILTEDSMNSFIRTLIQAGIWKNKVPKQTARTKDGMQTTVKKTEAEADARASQDTRLGFQPIVSVDVELLRQQRRFSSPRVLLSENTPLEPPPLYLTEEPVVLNRTSRRKREGKSHRGEYSVCDSESRWVTDKSSAVDIRGHQVTVLGEIRMGPS.

The first 3 residues, 1–3 (IQS), serve as a signal peptide directing secretion. A propeptide spanning residues 4-119 (SSMDQGILTE…VLNRTSRRKR (116 aa)) is cleaved from the precursor. The interval 36–61 (QTARTKDGMQTTVKKTEAEADARASQ) is disordered. A compositionally biased stretch (basic and acidic residues) spans 49–61 (KKTEAEADARASQ). Asn112 is a glycosylation site (N-linked (GlcNAc...) asparagine).

It belongs to the NGF-beta family.

Its subcellular location is the secreted. In terms of biological role, seems to promote the survival of visceral and proprioceptive sensory neurons. This is Neurotrophin-3 (NTF3) from Boa constrictor (Boa).